The primary structure comprises 31 residues: Ice-structuring glycoprotein 3 (31 aa).

O-linked (GalNAc...) threonine glycosylation is found at T3, T6, T9, T12, T15, T18, T21, T24, T27, and T30.

Post-translationally, O-linked glycans consist of Gal-GalNAc disaccharides. The three proteins may differ only in the number of repeating units of -Ala-Ala-Thr-.

Its subcellular location is the secreted. In terms of biological role, antifreeze proteins lower the blood freezing point. This fish lives in antarctic waters where it experiences water temperatures near -1.9 degrees Celsius. Its blood has a freezing point of about -2.0 degrees Celsius, and 30% of the freezing-point depression is due mainly to the 3 major high molecular weight glycoproteins in the plasma. This chain is Ice-structuring glycoprotein 3, found in Pagothenia borchgrevinki (Bald rockcod).